Consider the following 917-residue polypeptide: Probable dipeptidyl-aminopeptidase B (917 aa).

The disordered stretch occupies residues 1–78; it reads MGVEKRINDE…EGDLEEGFVP (78 aa). The Cytoplasmic segment spans residues 1–90; it reads MGVEKRINDE…GGWSAPRKVS (90 aa). Residues 16 to 26 are compositionally biased toward basic and acidic residues; sequence AERDDKSRDSI. A compositionally biased stretch (low complexity) spans 27–49; that stretch reads DSTSTASISLALLGGANGSAHGS. Positions 55-65 are enriched in basic and acidic residues; it reads RKSENQEKYHD. The chain crosses the membrane as a helical; Signal-anchor for type II membrane protein span at residues 91-111; that stretch reads VIFTLIVTLCIAGWLVAFFVL. Topologically, residues 112–917 are vacuolar; the sequence is LGRHKDSSKD…LGLINILRNG (806 aa). Asparagine 350 and asparagine 465 each carry an N-linked (GlcNAc...) asparagine glycan. Residue serine 754 is the Charge relay system of the active site. The N-linked (GlcNAc...) asparagine glycan is linked to asparagine 813. Catalysis depends on charge relay system residues aspartate 831 and histidine 864.

It belongs to the peptidase S9B family.

It is found in the vacuole membrane. The enzyme catalyses Release of an N-terminal dipeptide, Xaa-Yaa-|-Zaa-, from a polypeptide, preferentially when Yaa is Pro, provided Zaa is neither Pro nor hydroxyproline.. In terms of biological role, type IV dipeptidyl-peptidase which removes N-terminal dipeptides sequentially from polypeptides having unsubstituted N-termini provided that the penultimate residue is proline. The chain is Probable dipeptidyl-aminopeptidase B (DAPB) from Coccidioides posadasii (strain C735) (Valley fever fungus).